Here is a 235-residue protein sequence, read N- to C-terminus: uncharacterized protein (235 aa).

This is an uncharacterized protein from Escherichia coli (strain K12).